We begin with the raw amino-acid sequence, 396 residues long: Elongation factor Tu 1 (396 aa).

The 197-residue stretch at Lys-10–Thr-206 folds into the tr-type G domain. Positions Gly-19–Thr-26 are G1. Gly-19–Thr-26 is a binding site for GTP. Thr-26 provides a ligand contact to Mg(2+). The tract at residues Gly-60–Ser-64 is G2. The tract at residues Asp-81–Gly-84 is G3. GTP-binding positions include Asp-81–His-85 and Asn-136–Asp-139. The G4 stretch occupies residues Asn-136–Asp-139. Residues Ser-174–Arg-176 form a G5 region.

The protein belongs to the TRAFAC class translation factor GTPase superfamily. Classic translation factor GTPase family. EF-Tu/EF-1A subfamily. In terms of assembly, monomer.

The protein localises to the cytoplasm. It catalyses the reaction GTP + H2O = GDP + phosphate + H(+). Its function is as follows. GTP hydrolase that promotes the GTP-dependent binding of aminoacyl-tRNA to the A-site of ribosomes during protein biosynthesis. This chain is Elongation factor Tu 1, found in Xanthomonas campestris pv. campestris (strain B100).